Reading from the N-terminus, the 378-residue chain is MVFRVLQTDGDARVGKLTCHHGIIETPAFIPVGTYGVVKSVTSQEVAESGAQIILSNTFHLWLRPGLEIIKIHQNLHKFMNWMGPIITDSGGFQVFSLNKLRKITESGVYFKDPVNGSTIFLTPEKSMDIQYHLGSDIVLVFDECVSYPSTWEYIKNSVEISLNWAERSRLHFDKLHNSNMLFAIIQGGMYEELRNRSAQELINIKFDGYAIGGLSVGETPQERFRIVSYVCKIIPFDKPRYLMGVGKPQDLIEAVCLGVDMFDCVIPTRNARNGYLFTNNGVVRIRNAKYESDLDPIEEDCDCYTCQRYYSRSYLHYLDRCNESLGIRLNTIHNLRYYQRLMEEIRQSIRMKKLRKFVEAFNYKFNSVSTNNYLSNI.

Residue Asp-89 is the Proton acceptor of the active site. Substrate-binding positions include 89-93 (DSGGF), Asp-143, Gln-187, and Gly-214. An RNA binding region spans residues 245–251 (GVGKPQD). Residue Asp-264 is the Nucleophile of the active site. An RNA binding; important for wobble base 34 recognition region spans residues 269 to 273 (TRNAR). Cys-302, Cys-304, Cys-307, and His-334 together coordinate Zn(2+).

The protein belongs to the queuine tRNA-ribosyltransferase family. In terms of assembly, homodimer. Within each dimer, one monomer is responsible for RNA recognition and catalysis, while the other monomer binds to the replacement base PreQ1. Requires Zn(2+) as cofactor.

It catalyses the reaction 7-aminomethyl-7-carbaguanine + guanosine(34) in tRNA = 7-aminomethyl-7-carbaguanosine(34) in tRNA + guanine. The protein operates within tRNA modification; tRNA-queuosine biosynthesis. In terms of biological role, catalyzes the base-exchange of a guanine (G) residue with the queuine precursor 7-aminomethyl-7-deazaguanine (PreQ1) at position 34 (anticodon wobble position) in tRNAs with GU(N) anticodons (tRNA-Asp, -Asn, -His and -Tyr). Catalysis occurs through a double-displacement mechanism. The nucleophile active site attacks the C1' of nucleotide 34 to detach the guanine base from the RNA, forming a covalent enzyme-RNA intermediate. The proton acceptor active site deprotonates the incoming PreQ1, allowing a nucleophilic attack on the C1' of the ribose to form the product. After dissociation, two additional enzymatic reactions on the tRNA convert PreQ1 to queuine (Q), resulting in the hypermodified nucleoside queuosine (7-(((4,5-cis-dihydroxy-2-cyclopenten-1-yl)amino)methyl)-7-deazaguanosine). This chain is Queuine tRNA-ribosyltransferase, found in Blochmanniella floridana.